A 318-amino-acid polypeptide reads, in one-letter code: C1GALT1-specific chaperone 1 (318 aa).

The Cytoplasmic portion of the chain corresponds to 1-6 (MLSESS). The chain crosses the membrane as a helical; Signal-anchor for type II membrane protein span at residues 7–26 (SFLKGVMLGSIFCALITMLG). At 27–318 (HIRIGHGSRM…FLPPNGSDND (292 aa)) the chain is on the lumenal side.

The protein belongs to the glycosyltransferase 31 family. Beta3-Gal-T subfamily. Associates with core 1 beta-3-galactosyltransferase (C1GALT1), probably not with the soluble active form.

It is found in the membrane. In terms of biological role, probable chaperone required for the generation of 1 O-glycan Gal-beta1-3GalNAc-alpha1-Ser/Thr (T antigen), which is a precursor for many extended O-glycans in glycoproteins. Probably acts as a specific molecular chaperone assisting the folding/stability of core 1 beta-3-galactosyltransferase (C1GALT1). This Bos taurus (Bovine) protein is C1GALT1-specific chaperone 1 (C1GALT1C1).